The sequence spans 213 residues: Ethylene-responsive transcription factor WIN1 (213 aa).

Residues 15–72 (KFRGVRQRHWGSWVSEIRHPLLKRRVWLGTFETAEEAARAYDEAAVLMSGRNAKTNFP) constitute a DNA-binding region (AP2/ERF). Residues 70–80 (NFPIQRSSTGE) show a composition bias toward polar residues. 2 disordered regions span residues 70-99 (NFPI…GSST) and 159-213 (ASTD…RFII). A compositionally biased stretch (low complexity) spans 159 to 174 (ASTDAASQSTSATTAP).

This sequence belongs to the AP2/ERF transcription factor family. ERF subfamily. Mostly expressed in roots, stems and anthers, and, to a lower extent, in leaves, seeds and silks.

It is found in the nucleus. Functionally, promotes cuticle formation by inducing the expression of enzymes involved in wax biosynthesis, particularly promoting very-long-chain waxes formation. Confers drought resistance. Acts as a transcriptional activator binding directly to promoter regions of CER2, CER3.2 and KCS1, wax biosynthesis-related genes. Binds to the GCC-box pathogenesis-related promoter element. May be involved in the regulation of gene expression by stress factors and by components of stress signal transduction pathways. The sequence is that of Ethylene-responsive transcription factor WIN1 from Zea mays (Maize).